Here is a 304-residue protein sequence, read N- to C-terminus: Aquaglyceroporin-3 (304 aa).

Residues 1–68 (MQSQPDNVAY…LRLNYRDYMG (68 aa)) lie on the Cytoplasmic side of the membrane. Residues 69-89 (ELLGTFVLLFMGNGVVATVII) form a helical membrane-spanning segment. Topologically, residues 90–95 (DGKLGF) are extracellular. The chain crosses the membrane as a helical span at residues 96 to 116 (LSITLGWGIAVTMALYVSLGI). Residues 117–142 (SSGHLNPAVTVGNAVFGDFPWRKVPG) are Cytoplasmic-facing. A helical transmembrane segment spans residues 143–163 (YIAAQMLGAFLGAACAYGVFA). Residues 164-196 (DLLKAHGGGELIAFGEKGTAGVFSTYPRDSNGL) are Extracellular-facing. Residues 197-217 (FSCIFGEFICTAMLLFCVCGI) traverse the membrane as a helical segment. Residues 218–231 (FDPNNSPAKGHEPL) are Cytoplasmic-facing. The chain crosses the membrane as a helical span at residues 232–252 (AVGALVFAIGNNIGYSTGYAI). The Extracellular portion of the chain corresponds to 253 to 277 (NPARDFGPRVFSSFLYGGEVFSHAN). Residues 278-298 (YYFWVPLVIPLFGGIFGLFLY) traverse the membrane as a helical segment. Topologically, residues 299–304 (KYFVPH) are cytoplasmic.

This sequence belongs to the MIP/aquaporin (TC 1.A.8) family.

The protein resides in the cell membrane. The catalysed reaction is glycerol(in) = glycerol(out). It carries out the reaction H2O(in) = H2O(out). It catalyses the reaction urea(in) = urea(out). Its function is as follows. Mediates water and glycerol transport across the cell membrane. Permeable to urea. Permeable to methylamine/methylammonium. Permeable to dihydroxyacetone. Permeable to erythritol and ribitol. The protein is Aquaglyceroporin-3 of Trypanosoma brucei brucei.